Reading from the N-terminus, the 474-residue chain is Aspartyl/glutamyl-tRNA(Asn/Gln) amidotransferase subunit B (474 aa).

This sequence belongs to the GatB/GatE family. GatB subfamily. In terms of assembly, heterotrimer of A, B and C subunits.

It carries out the reaction L-glutamyl-tRNA(Gln) + L-glutamine + ATP + H2O = L-glutaminyl-tRNA(Gln) + L-glutamate + ADP + phosphate + H(+). It catalyses the reaction L-aspartyl-tRNA(Asn) + L-glutamine + ATP + H2O = L-asparaginyl-tRNA(Asn) + L-glutamate + ADP + phosphate + 2 H(+). In terms of biological role, allows the formation of correctly charged Asn-tRNA(Asn) or Gln-tRNA(Gln) through the transamidation of misacylated Asp-tRNA(Asn) or Glu-tRNA(Gln) in organisms which lack either or both of asparaginyl-tRNA or glutaminyl-tRNA synthetases. The reaction takes place in the presence of glutamine and ATP through an activated phospho-Asp-tRNA(Asn) or phospho-Glu-tRNA(Gln). In Desulfotalea psychrophila (strain LSv54 / DSM 12343), this protein is Aspartyl/glutamyl-tRNA(Asn/Gln) amidotransferase subunit B.